We begin with the raw amino-acid sequence, 83 residues long: NAD(P)H-quinone oxidoreductase subunit L (83 aa).

2 consecutive transmembrane segments (helical) span residues 15–35 (LFVL…VPLA) and 53–73 (LGVY…APFI).

Belongs to the complex I NdhL subunit family. As to quaternary structure, NDH-1 can be composed of about 15 different subunits; different subcomplexes with different compositions have been identified which probably have different functions.

The protein resides in the cellular thylakoid membrane. The catalysed reaction is a plastoquinone + NADH + (n+1) H(+)(in) = a plastoquinol + NAD(+) + n H(+)(out). It carries out the reaction a plastoquinone + NADPH + (n+1) H(+)(in) = a plastoquinol + NADP(+) + n H(+)(out). NDH-1 shuttles electrons from an unknown electron donor, via FMN and iron-sulfur (Fe-S) centers, to quinones in the respiratory and/or the photosynthetic chain. The immediate electron acceptor for the enzyme in this species is believed to be plastoquinone. Couples the redox reaction to proton translocation, and thus conserves the redox energy in a proton gradient. Cyanobacterial NDH-1 also plays a role in inorganic carbon-concentration. The chain is NAD(P)H-quinone oxidoreductase subunit L from Synechococcus sp. (strain CC9902).